The primary structure comprises 1873 residues: SAGA complex subunit Spt20 (1873 aa).

Belongs to the SPT20 family. As to quaternary structure, component of the Spt-Ada-Gcn5 acetyltransferase (SAGA) complex consisting of wda/Taf5L, Saf6, Taf9, Taf10b, Taf12, Ada1, Spt3, Spt7, Spt20, Sf3b3, Sf3b5, Nipped-A/Tra1, a histone acetyltransferase (HAT) module made up of Gcn5, Ada2b (Isoform B), Ada3 and Sgf29, and a deubiquitinase (DUB) module made up of not/nonstop, Sgf11 and e(y)2 tethered to SAGA by Atxn7.

It is found in the nucleus. Its function is as follows. Component of the transcription regulatory complex SAGA, a multiprotein complex that activates transcription by remodeling chromatin and mediating histone acetylation and deubiquitination. The SAGA complex predominantly acetylates histone H3. The protein is SAGA complex subunit Spt20 of Drosophila melanogaster (Fruit fly).